Consider the following 195-residue polypeptide: Adenylate kinase (195 aa).

8–16 (GIPGVGKTT) provides a ligand contact to ATP.

Belongs to the archaeal adenylate kinase family. In terms of assembly, homotrimer.

The protein resides in the cytoplasm. The enzyme catalyses AMP + ATP = 2 ADP. The chain is Adenylate kinase (adkA) from Saccharolobus solfataricus (strain ATCC 35092 / DSM 1617 / JCM 11322 / P2) (Sulfolobus solfataricus).